A 341-amino-acid polypeptide reads, in one-letter code: tRNA N6-adenosine threonylcarbamoyltransferase (341 aa).

The Fe cation site is built by H115 and H119. Substrate-binding positions include 138 to 142 (LVSGG), D171, G184, and N276. A Fe cation-binding site is contributed by D304.

This sequence belongs to the KAE1 / TsaD family. Requires Fe(2+) as cofactor.

The protein resides in the cytoplasm. It carries out the reaction L-threonylcarbamoyladenylate + adenosine(37) in tRNA = N(6)-L-threonylcarbamoyladenosine(37) in tRNA + AMP + H(+). Its function is as follows. Required for the formation of a threonylcarbamoyl group on adenosine at position 37 (t(6)A37) in tRNAs that read codons beginning with adenine. Is involved in the transfer of the threonylcarbamoyl moiety of threonylcarbamoyl-AMP (TC-AMP) to the N6 group of A37, together with TsaE and TsaB. TsaD likely plays a direct catalytic role in this reaction. This chain is tRNA N6-adenosine threonylcarbamoyltransferase, found in Stenotrophomonas maltophilia (strain K279a).